Here is a 124-residue protein sequence, read N- to C-terminus: Alpha-endosulfine (124 aa).

The residue at position 74 (S74) is a Phosphoserine; by GWL. Residues 99 to 124 (VTGDHIPTPQDLPQRKNTILTSKLAG) form a disordered region. Residues 113–124 (RKNTILTSKLAG) are compositionally biased toward polar residues.

The protein belongs to the endosulfine family. In terms of processing, phosphorylation at Ser-74 by gwl during mitosis is essential for interaction with ppp2r2d (PR55-delta) and subsequent inactivation of PP2A.

The protein resides in the cytoplasm. Functionally, protein phosphatase inhibitor that specifically inhibits protein phosphatase 2A (PP2A) during mitosis. When phosphorylated at Ser-67 during mitosis, specifically interacts with ppp2r2d (PR55-delta) and inhibits its activity, leading to inactivation of PP2A, an essential condition to keep cyclin-B1-CDK1 activity high during M phase. The sequence is that of Alpha-endosulfine (ensa) from Danio rerio (Zebrafish).